Consider the following 370-residue polypeptide: Phenylalanine dehydrogenase (370 aa).

Arg-44 contributes to the NAD(+) binding site. Residue Lys-68 participates in L-phenylalanine binding. The active-site Proton donor/acceptor is the Lys-80. 114–115 (TD) contributes to the L-phenylalanine binding site. NAD(+) is bound by residues Asp-115, Ser-146, Thr-150, 180 to 186 (GLGKVGF), 203 to 204 (DV), 243 to 244 (AI), and 264 to 266 (AAN). Asn-266 provides a ligand contact to L-phenylalanine.

It belongs to the Glu/Leu/Phe/Val dehydrogenases family.

The catalysed reaction is L-phenylalanine + NAD(+) + H2O = 3-phenylpyruvate + NH4(+) + NADH + H(+). It functions in the pathway amino-acid biosynthesis; L-phenylalanine biosynthesis; L-phenylalanine from phenylpyruvate (PDH route): step 1/1. In terms of biological role, catalyzes the reversible NAD(+)-dependent oxidative deamination of L-phenylalanine to phenylpyruvate. This is Phenylalanine dehydrogenase from Caldalkalibacillus thermarum (strain TA2.A1).